Reading from the N-terminus, the 21-residue chain is Nigrocin-2JDa (21 aa).

Cysteine 15 and cysteine 21 form a disulfide bridge.

In terms of tissue distribution, expressed by the skin glands.

It localises to the secreted. Has antibacterial activity against E.coli ATCC 25992 (MIC=16 uM), E.coli CIB 84492 (MIC=16 uM), S.aureus ATCC 25923 (MIC=16 uM) and S.aureus CIB 85462 (MIC=8 uM). Has antifungal activity against C.albicans (MIC=63 uM). Has hemolytic activity against rabbit erythrocytes. This chain is Nigrocin-2JDa, found in Odorrana jingdongensis (Jingdong frog).